The following is a 232-amino-acid chain: Putative homeobox protein NANOG2 (232 aa).

The tract at residues 1 to 39 (MDLPIQDSHDSSTSPKGKQPTTAEKSATKKEDKVPVKKQ) is disordered. The span at 11–25 (SSTSPKGKQPTTAEK) shows a compositional bias: polar residues. A compositionally biased stretch (basic and acidic residues) spans 26–35 (SATKKEDKVP). 8 repeat units span residues 123–127 (WSNQT), 128–132 (WNNST), 133–137 (WSNQT), 143–147 (WSNHS), 148–152 (WNTQT), 153–157 (WCTQS), 158–162 (WNNQA), and 163–167 (WNSPF). Residues 123-167 (WSNQTWNNSTWSNQTQNIQSWSNHSWNTQTWCTQSWNNQAWNSPF) form an 8 X repeats starting with a Trp in each unit region. The segment at 123-167 (WSNQTWNNSTWSNQTQNIQSWSNHSWNTQTWCTQSWNNQAWNSPF) is sufficient for transactivation activity. The sufficient for strong transactivation activity stretch occupies residues 168 to 232 (YNCGEESLQS…YSMNMQPEDV (65 aa)).

Belongs to the Nanog homeobox family.

It localises to the nucleus. Its function is as follows. Probable transcriptional regulator. The protein is Putative homeobox protein NANOG2 (NANOGP1) of Homo sapiens (Human).